The sequence spans 94 residues: MSRSTKKGPYVDEKLFEKMQKLNKTGDRKVVKTWARASVITPEFVGHTIAIHNGKKFFPIFISEQMVGHKLGEFAPTRTFKGHGGMTKQETSLV.

The protein belongs to the universal ribosomal protein uS19 family.

Its function is as follows. Protein S19 forms a complex with S13 that binds strongly to the 16S ribosomal RNA. In Endomicrobium trichonymphae, this protein is Small ribosomal subunit protein uS19.